Here is a 340-residue protein sequence, read N- to C-terminus: Chitinase 7 (340 aa).

The signal sequence occupies residues 1–32; that stretch reads MIAARAANLQVAMKALALAVLALAYAAATARA. Residues 33 to 73 enclose the Chitin-binding type-1 domain; sequence EQCGRQAGGARCPNRLCCSRWGWCGLTDDYCKGGCQSQCRV. 7 cysteine pairs are disulfide-bonded: Cys35-Cys50, Cys44-Cys56, Cys49-Cys63, Cys67-Cys71, Cys118-Cys173, Cys185-Cys193, and Cys293-Cys323.

Belongs to the glycosyl hydrolase 19 family. Chitinase class I subfamily. As to expression, expressed in pistils, stamens and lodicules.

It catalyses the reaction Random endo-hydrolysis of N-acetyl-beta-D-glucosaminide (1-&gt;4)-beta-linkages in chitin and chitodextrins.. Hydrolyzes chitin and may play a role in defense against fungal pathogens containing chitin. This Oryza sativa subsp. japonica (Rice) protein is Chitinase 7 (Cht7).